The following is a 378-amino-acid chain: UDP-4-amino-4-deoxy-L-arabinose--oxoglutarate aminotransferase (378 aa).

An N6-(pyridoxal phosphate)lysine modification is found at Lys-182.

This sequence belongs to the DegT/DnrJ/EryC1 family. ArnB subfamily. As to quaternary structure, homodimer. Pyridoxal 5'-phosphate serves as cofactor.

The catalysed reaction is UDP-4-amino-4-deoxy-beta-L-arabinose + 2-oxoglutarate = UDP-beta-L-threo-pentopyranos-4-ulose + L-glutamate. Its pathway is nucleotide-sugar biosynthesis; UDP-4-deoxy-4-formamido-beta-L-arabinose biosynthesis; UDP-4-deoxy-4-formamido-beta-L-arabinose from UDP-alpha-D-glucuronate: step 2/3. It functions in the pathway bacterial outer membrane biogenesis; lipopolysaccharide biosynthesis. Functionally, catalyzes the conversion of UDP-4-keto-arabinose (UDP-Ara4O) to UDP-4-amino-4-deoxy-L-arabinose (UDP-L-Ara4N). The modified arabinose is attached to lipid A and is required for resistance to polymyxin and cationic antimicrobial peptides. The polypeptide is UDP-4-amino-4-deoxy-L-arabinose--oxoglutarate aminotransferase (Aeromonas hydrophila subsp. hydrophila (strain ATCC 7966 / DSM 30187 / BCRC 13018 / CCUG 14551 / JCM 1027 / KCTC 2358 / NCIMB 9240 / NCTC 8049)).